The sequence spans 157 residues: Ribosomal RNA large subunit methyltransferase H (157 aa).

S-adenosyl-L-methionine is bound by residues Leu-73, Gly-105, and 124–129; that span reads LSQMTF.

Belongs to the RNA methyltransferase RlmH family. Homodimer.

It localises to the cytoplasm. The enzyme catalyses pseudouridine(1915) in 23S rRNA + S-adenosyl-L-methionine = N(3)-methylpseudouridine(1915) in 23S rRNA + S-adenosyl-L-homocysteine + H(+). Specifically methylates the pseudouridine at position 1915 (m3Psi1915) in 23S rRNA. The sequence is that of Ribosomal RNA large subunit methyltransferase H from Flavobacterium psychrophilum (strain ATCC 49511 / DSM 21280 / CIP 103535 / JIP02/86).